A 528-amino-acid chain; its full sequence is Aspartic proteinase-like protein 1 (528 aa).

A signal peptide spans 1-22 (MVSRSAFLLFCVLFLATEETLA). Residues 100 to 449 (HYTWIDIGTP…DRENMKLGWS (350 aa)) enclose the Peptidase A1 domain. Asp-118 is an active-site residue. Asn-193 and Asn-217 each carry an N-linked (GlcNAc...) asparagine glycan. Asp-333 is an active-site residue. N-linked (GlcNAc...) asparagine glycosylation is found at Asn-358 and Asn-391. Positions 451 to 503 (SKCQEDKIEPPQASPGSTSSPNPLPTDEQQSRGGHAVSPAIAGKTPSKTPSSS) are disordered. Positions 464–482 (SPGSTSSPNPLPTDEQQSR) are enriched in polar residues. The segment covering 494 to 503 (KTPSKTPSSS) has biased composition (low complexity). The GPI-anchor amidated serine moiety is linked to residue Ser-503. A propeptide spans 504–528 (SSYSFSSIMRLFNSLLLLHWLASLM) (removed in mature form).

The protein belongs to the peptidase A1 family.

The protein resides in the cell membrane. The chain is Aspartic proteinase-like protein 1 from Arabidopsis thaliana (Mouse-ear cress).